Reading from the N-terminus, the 169-residue chain is E1B protein, small T-antigen (169 aa).

This sequence belongs to the adenoviridae E1B 19 kDa protein family.

The protein is E1B protein, small T-antigen of Canis lupus familiaris (Dog).